Consider the following 608-residue polypeptide: Myosin light chain kinase 2, skeletal/cardiac muscle (608 aa).

The disordered stretch occupies residues M1–P160. At A2 the chain carries N-acetylalanine. 2 stretches are compositionally biased toward basic and acidic residues: residues A31 to K43 and T50 to A63. Residues G82–G91 are compositionally biased toward gly residues. A compositionally biased stretch (basic and acidic residues) spans A116 to P127. S153, S159, and S161 each carry phosphoserine. Residues Q214–S235 form a disordered region. In terms of domain architecture, Protein kinase spans M297–L552. Residues L303–V311 and K326 each bind ATP. Residue D418 is the Proton acceptor of the active site. T457 is subject to Phosphothreonine. The interval I586 to S598 is calmodulin-binding.

This sequence belongs to the protein kinase superfamily. CAMK Ser/Thr protein kinase family. As to quaternary structure, may interact with centrin.

Its subcellular location is the cytoplasm. It carries out the reaction L-seryl-[myosin light chain] + ATP = O-phospho-L-seryl-[myosin light chain] + ADP + H(+). The enzyme catalyses L-threonyl-[myosin light chain] + ATP = O-phospho-L-threonyl-[myosin light chain] + ADP + H(+). Implicated in the level of global muscle contraction and cardiac function. Phosphorylates a specific serine in the N-terminus of a myosin light chain. This Oryctolagus cuniculus (Rabbit) protein is Myosin light chain kinase 2, skeletal/cardiac muscle (MYLK2).